We begin with the raw amino-acid sequence, 345 residues long: Protein RecA (345 aa).

Residue 65–72 coordinates ATP; the sequence is GPESSGKT. A compositionally biased stretch (basic and acidic residues) spans 326-336; the sequence is EKFQPAEAARE. Positions 326–345 are disordered; it reads EKFQPAEAAREEGDDEGEDE.

This sequence belongs to the RecA family.

The protein localises to the cytoplasm. Its function is as follows. Can catalyze the hydrolysis of ATP in the presence of single-stranded DNA, the ATP-dependent uptake of single-stranded DNA by duplex DNA, and the ATP-dependent hybridization of homologous single-stranded DNAs. It interacts with LexA causing its activation and leading to its autocatalytic cleavage. This chain is Protein RecA, found in Stenotrophomonas maltophilia (strain K279a).